Reading from the N-terminus, the 444-residue chain is Platelet-activating factor acetylhydrolase (444 aa).

The N-terminal stretch at Met-1–Pro-21 is a signal peptide. 2 N-linked (GlcNAc...) asparagine glycosylation sites follow: Asn-60 and Asn-200. The active-site Nucleophile is Ser-274. Catalysis depends on charge relay system residues Asp-297 and His-352. Residue Asn-424 is glycosylated (N-linked (GlcNAc...) asparagine).

Belongs to the AB hydrolase superfamily. Lipase family. N-glycosylated. Plasma.

The protein localises to the secreted. It is found in the extracellular space. The catalysed reaction is a 1-O-alkyl-2-acetyl-sn-glycero-3-phosphocholine + H2O = a 1-O-alkyl-sn-glycero-3-phosphocholine + acetate + H(+). It carries out the reaction 1-O-decyl-2-acetyl-sn-glycero-3-phosphocholine + H2O = 1-O-decyl-sn-glycero-3-phosphocholine + acetate + H(+). It catalyses the reaction 1-O-dodecyl-2-acetyl-sn-glycero-3-phosphocholine + H2O = 1-O-dodecyl-sn-glycero-3-phosphocholine + acetate + H(+). The enzyme catalyses 1-O-tetradecyl-2-acetyl-sn-glycero-3-phosphocholine + H2O = 1-O-tetradecyl-sn-glycero-3-phosphocholine + acetate + H(+). The catalysed reaction is 1-O-hexadecyl-2-acetyl-sn-glycero-3-phosphocholine + H2O = 1-O-hexadecyl-sn-glycero-3-phosphocholine + acetate + H(+). It carries out the reaction 1-O-octadecyl-2-acetyl-sn-glycero-3-phosphocholine + H2O = 1-O-octadecyl-sn-glycero-3-phosphocholine + acetate + H(+). It catalyses the reaction 1-hexadecanoyl-2-acetyl-sn-glycero-3-phosphocholine + H2O = 1-hexadecanoyl-sn-glycero-3-phosphocholine + acetate + H(+). The enzyme catalyses 1-hexadecanoyl-2-propionyl-sn-glycero-3-phosphocholine + H2O = propanoate + 1-hexadecanoyl-sn-glycero-3-phosphocholine + H(+). The catalysed reaction is 1-hexadecanoyl-2-butanoyl-sn-glycero-3-phosphocholine + H2O = butanoate + 1-hexadecanoyl-sn-glycero-3-phosphocholine + H(+). It carries out the reaction 1-hexadecanoyl-2-pentanoyl-sn-glycero-3-phosphocholine + H2O = pentanoate + 1-hexadecanoyl-sn-glycero-3-phosphocholine + H(+). It catalyses the reaction 1-hexadecanoyl-2-glutaroyl-sn-glycero-3-phosphocholine + H2O = glutarate + 1-hexadecanoyl-sn-glycero-3-phosphocholine + H(+). The enzyme catalyses 1-hexadecanoyl-2-(5-oxopentanoyl)-sn-glycero-3-phosphocholine + H2O = 5-oxopentanoate + 1-hexadecanoyl-sn-glycero-3-phosphocholine + H(+). The catalysed reaction is 1-hexadecanoyl-2-(9-oxononanoyl)-sn-glycero-3-phosphocholine + H2O = 9-oxononanoate + 1-hexadecanoyl-sn-glycero-3-phosphocholine + H(+). It carries out the reaction 1-hexadecanoyl-2-[9-hydroperoxy-(10E-octadecenoyl)]-sn-glycero-3-phosphocholine + H2O = 9-hydroperoxy-10E-octadecenoate + 1-hexadecanoyl-sn-glycero-3-phosphocholine + H(+). It catalyses the reaction 1-hexadecanoyl-2-(10-hydroperoxy-8E-octadecenoyl)-sn-glycero-3-phosphocholine + H2O = 10-hydroperoxy-(8E)-octadecenoate + 1-hexadecanoyl-sn-glycero-3-phosphocholine + H(+). Functionally, lipoprotein-associated calcium-independent phospholipase A2 involved in phospholipid catabolism during inflammatory and oxidative stress response. At the lipid-aqueous interface, hydrolyzes the ester bond of fatty acyl group attached at sn-2 position of phospholipids (phospholipase A2 activity). Specifically targets phospholipids with a short-chain fatty acyl group at sn-2 position. Can hydrolyze phospholipids with long fatty acyl chains, only if they carry oxidized functional groups. Hydrolyzes and inactivates platelet-activating factor (PAF, 1-O-alkyl-2-acetyl-sn-glycero-3-phosphocholine), a potent pro-inflammatory signaling lipid that acts through PTAFR on various innate immune cells. Hydrolyzes oxidatively truncated phospholipids carrying an aldehyde group at omega position, preventing their accumulation in low-density lipoprotein (LDL) particles and uncontrolled pro-inflammatory effects. As part of high-density lipoprotein (HDL) particles, can hydrolyze phospholipids having long-chain fatty acyl hydroperoxides at sn-2 position and protect against potential accumulation of these oxylipins in the vascular wall. Catalyzes the release from membrane phospholipids of F2-isoprostanes, lipid biomarkers of cellular oxidative damage. In Canis lupus familiaris (Dog), this protein is Platelet-activating factor acetylhydrolase (PLA2G7).